We begin with the raw amino-acid sequence, 128 residues long: Transcription antitermination protein NusB (128 aa).

This sequence belongs to the NusB family.

Its function is as follows. Involved in transcription antitermination. Required for transcription of ribosomal RNA (rRNA) genes. Binds specifically to the boxA antiterminator sequence of the ribosomal RNA (rrn) operons. This Listeria monocytogenes serotype 4b (strain CLIP80459) protein is Transcription antitermination protein NusB.